A 452-amino-acid chain; its full sequence is Probable splicing factor, arginine/serine-rich 7 (452 aa).

RRM domains follow at residues 10–91 (KILH…YPNP) and 163–240 (RTVY…HSRV). A disordered region spans residues 258-452 (EEAIRMGRNG…GNGDVVMASE (195 aa)). The segment covering 259-272 (EAIRMGRNGDDRDR) has biased composition (basic and acidic residues). Over residues 273–290 (RRSRSPRRRRSPSPRRRR) the composition is skewed to basic residues. Basic and acidic residues predominate over residues 291-305 (DSRDRDRDRDRDRRR). 3 stretches are compositionally biased toward basic residues: residues 323 to 335 (KRSRSRDRKRRSR), 345 to 360 (KRSRSRDRRRRSKSRD), and 370 to 382 (SKDRKRDKKRSRS). A compositionally biased stretch (basic and acidic residues) spans 383-421 (RSPEKRRDKEDRKTEKKENENESSLREKLLEKKAARKDS).

The protein belongs to the splicing factor SR family. Extensively phosphorylated on serine residues in the RS domain.

The protein resides in the nucleus. The polypeptide is Probable splicing factor, arginine/serine-rich 7 (rsp-7) (Caenorhabditis elegans).